A 118-amino-acid chain; its full sequence is Putative pterin-4-alpha-carbinolamine dehydratase (118 aa).

Belongs to the pterin-4-alpha-carbinolamine dehydratase family.

The catalysed reaction is (4aS,6R)-4a-hydroxy-L-erythro-5,6,7,8-tetrahydrobiopterin = (6R)-L-erythro-6,7-dihydrobiopterin + H2O. This is Putative pterin-4-alpha-carbinolamine dehydratase from Pseudomonas putida (strain ATCC 700007 / DSM 6899 / JCM 31910 / BCRC 17059 / LMG 24140 / F1).